A 427-amino-acid chain; its full sequence is Serine/threonine-protein kinase AFC2 (427 aa).

A Protein kinase domain is found at 98–423; it reads YKIYSKMGEG…AREALRHPFF (326 aa). Residues 104 to 112 and Lys-127 each bind ATP; that span reads MGEGTFGQV. Asp-223 acts as the Proton acceptor in catalysis.

This sequence belongs to the protein kinase superfamily. CMGC Ser/Thr protein kinase family. Lammer subfamily.

The enzyme catalyses L-seryl-[protein] + ATP = O-phospho-L-seryl-[protein] + ADP + H(+). The catalysed reaction is L-threonyl-[protein] + ATP = O-phospho-L-threonyl-[protein] + ADP + H(+). It carries out the reaction L-tyrosyl-[protein] + ATP = O-phospho-L-tyrosyl-[protein] + ADP + H(+). In Arabidopsis thaliana (Mouse-ear cress), this protein is Serine/threonine-protein kinase AFC2 (AFC2).